Here is a 396-residue protein sequence, read N- to C-terminus: Actin-related protein 6 (396 aa).

Threonine 2 carries the N-acetylthreonine modification. An N6-acetyllysine modification is found at lysine 260.

This sequence belongs to the actin family. ARP6 subfamily. As to quaternary structure, component of the chromatin-remodeling SRCAP complex composed of at least SRCAP, DMAP1, RUVBL1, RUVBL2, ACTL6A, YEATS4, ACTR6 and ZNHIT1. Interacts with CBX1, CBX3 and CBX5.

It localises to the cytoplasm. The protein resides in the cytoskeleton. The protein localises to the nucleus. Its subcellular location is the nucleolus. Functionally, required for formation and/or maintenance of proper nucleolar structure and function. Plays a dual role in the regulation of ribosomal DNA (rDNA) transcription. In the presence of high glucose, maintains active rDNA transcription through H2A.Z deposition and under glucose starvation, is required for the repression of rDNA transcription, and this function may be independent of H2A.Z. The chain is Actin-related protein 6 (ACTR6) from Homo sapiens (Human).